The chain runs to 127 residues: Holo-[acyl-carrier-protein] synthase (127 aa).

Positions 8 and 57 each coordinate Mg(2+).

The protein belongs to the P-Pant transferase superfamily. AcpS family. Requires Mg(2+) as cofactor.

It is found in the cytoplasm. It catalyses the reaction apo-[ACP] + CoA = holo-[ACP] + adenosine 3',5'-bisphosphate + H(+). In terms of biological role, transfers the 4'-phosphopantetheine moiety from coenzyme A to a Ser of acyl-carrier-protein. This Ruthia magnifica subsp. Calyptogena magnifica protein is Holo-[acyl-carrier-protein] synthase.